Here is a 149-residue protein sequence, read N- to C-terminus: Ribonuclease pancreatic (149 aa).

An N-terminal signal peptide occupies residues 1 to 25 (MGLEKSLILFPLFFLLLGWVQPSLG). Residues Lys32 and Arg35 each contribute to the substrate site. The active-site Proton acceptor is the His37. 4 disulfides stabilise this stretch: Cys51/Cys109, Cys65/Cys120, Cys83/Cys135, and Cys90/Cys97. Residues 66–70 (KPVNT) and Lys91 contribute to the substrate site. His144 (proton donor) is an active-site residue.

It belongs to the pancreatic ribonuclease family. As to quaternary structure, monomer. Interacts with and forms tight 1:1 complexes with RNH1. Dimerization of two such complexes may occur. Interaction with RNH1 inhibits this protein. In terms of tissue distribution, pancreas.

It is found in the secreted. The catalysed reaction is an [RNA] containing cytidine + H2O = an [RNA]-3'-cytidine-3'-phosphate + a 5'-hydroxy-ribonucleotide-3'-[RNA].. It catalyses the reaction an [RNA] containing uridine + H2O = an [RNA]-3'-uridine-3'-phosphate + a 5'-hydroxy-ribonucleotide-3'-[RNA].. Endonuclease that catalyzes the cleavage of RNA on the 3' side of pyrimidine nucleotides. Acts on single-stranded and double-stranded RNA. This is Ribonuclease pancreatic (Rnase1) from Mus musculus (Mouse).